The sequence spans 405 residues: Terpene cyclase pbrA (405 aa).

Residues Asp103, Glu168, Asn229, Ser233, Glu237, and Asp241 each contribute to the Mg(2+) site. A D(D/E)XX(D/E) motif motif is present at residues 103–108 (DDEISS). Positions 227 to 237 (LVNDLFSFYKE) match the NSE motif motif. The WxxxxxRY motif motif lies at 316-323 (EDLGGSSA).

The protein belongs to the trichodiene synthase family. Mg(2+) serves as cofactor.

Its pathway is secondary metabolite biosynthesis; terpenoid biosynthesis. Terpene cyclase; part of the gene cluster that mediates the biosynthesis of the sesquiterpenoid aspterric acid (AA), an inhibitor of dihydroxy-acid dehydratase (DHAD) effective as an herbicide. PbrA cyclizes farnesyl diphosphate (FPP) to produce (-)-daucane. The cytochrome P450 monooxygenase pbrBB then converts (-)-daucane into the alpha-epoxy carboxylate intermediate which is further converted into the tricyclic aspterric acid by the cytochrome P450 monooxygenase pbrC. This Penicillium brasilianum protein is Terpene cyclase pbrA.